Consider the following 378-residue polypeptide: Glutamate 5-kinase (378 aa).

Residue K19 participates in ATP binding. The substrate site is built by S59, D146, and N158. 178 to 179 (TD) provides a ligand contact to ATP. The PUA domain maps to 285–363 (RGSVTVDPGA…SEFEKLLGYT (79 aa)).

This sequence belongs to the glutamate 5-kinase family.

It is found in the cytoplasm. The enzyme catalyses L-glutamate + ATP = L-glutamyl 5-phosphate + ADP. It participates in amino-acid biosynthesis; L-proline biosynthesis; L-glutamate 5-semialdehyde from L-glutamate: step 1/2. Functionally, catalyzes the transfer of a phosphate group to glutamate to form L-glutamate 5-phosphate. The protein is Glutamate 5-kinase of Polaromonas naphthalenivorans (strain CJ2).